We begin with the raw amino-acid sequence, 202 residues long: Adenylate kinase (202 aa).

Residue 12–20 (GVPGVGKTT) participates in ATP binding.

Belongs to the archaeal adenylate kinase family.

The protein localises to the cytoplasm. It catalyses the reaction AMP + ATP = 2 ADP. The polypeptide is Adenylate kinase (adkA) (Aeropyrum pernix (strain ATCC 700893 / DSM 11879 / JCM 9820 / NBRC 100138 / K1)).